Here is a 786-residue protein sequence, read N- to C-terminus: Digalactosyldiacylglycerol synthase 1, chloroplastic (786 aa).

The transit peptide at 1 to 25 (MASQRQPPSSSNAFSFLSKGWREVR) directs the protein to the chloroplast.

Belongs to the glycosyltransferase group 1 family. Glycosyltransferase 4 subfamily. High expression in nodules infected cells, but low in nodule inner cortex and root central cylinder.

It is found in the plastid. It localises to the chloroplast outer membrane. The protein resides in the plastid outer membrane. It catalyses the reaction a 1,2-diacyl-3-O-(beta-D-galactosyl)-sn-glycerol + UDP-alpha-D-galactose = a 1,2-diacyl-3-O-[alpha-D-galactosyl-(1-&gt;6)-beta-D-galactosyl]-sn-glycerol + UDP + H(+). Involved in the synthesis of diacylglycerol galactolipids that are specifically found in thylakoid and in nodule peribacteroid membranes. Specific for alpha-glycosidic linkages. The chain is Digalactosyldiacylglycerol synthase 1, chloroplastic from Lotus japonicus (Lotus corniculatus var. japonicus).